The following is a 188-amino-acid chain: Peptidyl-tRNA hydrolase (188 aa).

F15 contributes to the tRNA binding site. H20 (proton acceptor) is an active-site residue. TRNA is bound by residues Y64, N66, and N112.

The protein belongs to the PTH family. Monomer.

The protein resides in the cytoplasm. The catalysed reaction is an N-acyl-L-alpha-aminoacyl-tRNA + H2O = an N-acyl-L-amino acid + a tRNA + H(+). Its function is as follows. Hydrolyzes ribosome-free peptidyl-tRNAs (with 1 or more amino acids incorporated), which drop off the ribosome during protein synthesis, or as a result of ribosome stalling. Functionally, catalyzes the release of premature peptidyl moieties from peptidyl-tRNA molecules trapped in stalled 50S ribosomal subunits, and thus maintains levels of free tRNAs and 50S ribosomes. The chain is Peptidyl-tRNA hydrolase from Borrelia recurrentis (strain A1).